Consider the following 264-residue polypeptide: Tropinone reductase homolog At5g06060 (264 aa).

Leu15–His39 serves as a coordination point for NADP(+). Position 148 (Ser148) interacts with substrate. Catalysis depends on Tyr161, which acts as the Proton acceptor.

It belongs to the short-chain dehydrogenases/reductases (SDR) family. SDR65C subfamily.

In Arabidopsis thaliana (Mouse-ear cress), this protein is Tropinone reductase homolog At5g06060.